A 1212-amino-acid chain; its full sequence is DNA topoisomerase 1 (1212 aa).

Residues 1 to 114 (MKLVVVESPA…DVERVTFNAI (114 aa)) form the Toprim domain. Positions 7 and 80 each coordinate Mg(2+). Positions 130–556 (DNDLINAYLA…AFWHDFKPKT (427 aa)) constitute a Topo IA-type catalytic domain. An interaction with DNA region spans residues 164 to 169 (SAGRVQ). Residue Y293 is the O-(5'-phospho-DNA)-tyrosine intermediate of the active site. Residues 592-619 (CPSCHTGRLALKGGRFGAFIACSNYPEC) form a C4-type zinc finger. 3 disordered regions span residues 687–742 (GKGN…GVST), 758–937 (ALAG…KARA), and 1107–1212 (RAKM…EVAE). Polar residues-rich tracts occupy residues 708-742 (ASSTGNVASSQSRMTGDETASSGNSRDSSAHGVST) and 770-782 (VSDNKGNNSSSTI). Residues 815–840 (ADNRLLSHRNGDIDSRAIPADHKDSS) are compositionally biased toward basic and acidic residues. Polar residues-rich tracts occupy residues 881-890 (AITSDNSPSD) and 897-906 (STPSSATSSV). A compositionally biased stretch (basic and acidic residues) spans 921-934 (KADEQAKEEEESRK). A compositionally biased stretch (basic residues) spans 1109–1140 (KMPKKKKTKKAAAKKPAAKKTTTKKAAPKKAT). Positions 1141–1151 (TKTATPKSATT) are enriched in low complexity. Residues 1167 to 1182 (PAKKAVAKKTTAKKPA) show a composition bias toward basic residues. Residues 1183-1199 (SKSATKKAPSSKTTAAK) are compositionally biased toward low complexity.

The protein belongs to the type IA topoisomerase family. As to quaternary structure, monomer. Mg(2+) serves as cofactor.

The enzyme catalyses ATP-independent breakage of single-stranded DNA, followed by passage and rejoining.. Its function is as follows. Releases the supercoiling and torsional tension of DNA, which is introduced during the DNA replication and transcription, by transiently cleaving and rejoining one strand of the DNA duplex. Introduces a single-strand break via transesterification at a target site in duplex DNA. The scissile phosphodiester is attacked by the catalytic tyrosine of the enzyme, resulting in the formation of a DNA-(5'-phosphotyrosyl)-enzyme intermediate and the expulsion of a 3'-OH DNA strand. The free DNA strand then undergoes passage around the unbroken strand, thus removing DNA supercoils. Finally, in the religation step, the DNA 3'-OH attacks the covalent intermediate to expel the active-site tyrosine and restore the DNA phosphodiester backbone. The protein is DNA topoisomerase 1 of Zymomonas mobilis subsp. mobilis (strain ATCC 31821 / ZM4 / CP4).